The sequence spans 159 residues: Ribosomal RNA large subunit methyltransferase H (159 aa).

S-adenosyl-L-methionine-binding positions include leucine 76, glycine 108, and 127 to 132 (FGLLTL).

This sequence belongs to the RNA methyltransferase RlmH family. In terms of assembly, homodimer.

The protein resides in the cytoplasm. It carries out the reaction pseudouridine(1915) in 23S rRNA + S-adenosyl-L-methionine = N(3)-methylpseudouridine(1915) in 23S rRNA + S-adenosyl-L-homocysteine + H(+). Its function is as follows. Specifically methylates the pseudouridine at position 1915 (m3Psi1915) in 23S rRNA. This is Ribosomal RNA large subunit methyltransferase H from Streptococcus pyogenes serotype M3 (strain SSI-1).